The sequence spans 320 residues: Cytochrome f (320 aa).

A signal peptide spans 1-35; that stretch reads MHTKNLFYSRTQQITQYLSALLMMVILTRTSISSA. Tyr36, Cys56, Cys59, and His60 together coordinate heme. Residues 286-306 traverse the membrane as a helical segment; it reads VQVLLFFFASIILAQIFLVLK.

The protein belongs to the cytochrome f family. As to quaternary structure, the 4 large subunits of the cytochrome b6-f complex are cytochrome b6, subunit IV (17 kDa polypeptide, petD), cytochrome f and the Rieske protein, while the 4 small subunits are PetG, PetL, PetM and PetN. The complex functions as a dimer. Heme serves as cofactor.

The protein localises to the plastid thylakoid membrane. In terms of biological role, component of the cytochrome b6-f complex, which mediates electron transfer between photosystem II (PSII) and photosystem I (PSI), cyclic electron flow around PSI, and state transitions. This chain is Cytochrome f, found in Cuscuta gronovii (Common dodder).